Reading from the N-terminus, the 180-residue chain is MAEPELQLVARRIRSFPDFPIPGVLFRDISPLLKDPDSFRASIRLLANHLKSKHGGKIDYIAGLDSRGFLFGPSLAQELGLGCVLIRKRGKLPGPTVSASYALEYGKAELEIQKDALEPGQKVVIVDDLLATGGTMCAACQLLGQLRAEVVECVSLVELTSLKGREKLGPVPFFSLLQYE.

Ala-2 bears the N-acetylalanine mark. Ser-15 and Ser-30 each carry phosphoserine. Tyr-60 carries the post-translational modification Phosphotyrosine. Position 66 is a phosphoserine (Ser-66). N6-acetyllysine is present on Lys-114. Thr-135 bears the Phosphothreonine mark.

This sequence belongs to the purine/pyrimidine phosphoribosyltransferase family. Homodimer.

It localises to the cytoplasm. It catalyses the reaction AMP + diphosphate = 5-phospho-alpha-D-ribose 1-diphosphate + adenine. It participates in purine metabolism; AMP biosynthesis via salvage pathway; AMP from adenine: step 1/1. Functionally, catalyzes a salvage reaction resulting in the formation of AMP, that is energically less costly than de novo synthesis. The protein is Adenine phosphoribosyltransferase of Dipodillus campestris (North African gerbil).